Consider the following 287-residue polypeptide: Thymidylate synthase (287 aa).

Arg-21 lines the dUMP pocket. Asn-51 contributes to the (6R)-5,10-methylene-5,6,7,8-tetrahydrofolate binding site. 150 to 151 provides a ligand contact to dUMP; that stretch reads RR. Cys-170 functions as the Nucleophile in the catalytic mechanism. Residues 190 to 193, Asn-201, and 231 to 233 contribute to the dUMP site; these read RSGD and HIY. Asp-193 lines the (6R)-5,10-methylene-5,6,7,8-tetrahydrofolate pocket. Ala-286 is a binding site for (6R)-5,10-methylene-5,6,7,8-tetrahydrofolate.

Belongs to the thymidylate synthase family. Bacterial-type ThyA subfamily. Homodimer.

It localises to the cytoplasm. It catalyses the reaction dUMP + (6R)-5,10-methylene-5,6,7,8-tetrahydrofolate = 7,8-dihydrofolate + dTMP. It functions in the pathway pyrimidine metabolism; dTTP biosynthesis. Catalyzes the reductive methylation of 2'-deoxyuridine-5'-monophosphate (dUMP) to 2'-deoxythymidine-5'-monophosphate (dTMP) while utilizing 5,10-methylenetetrahydrofolate (mTHF) as the methyl donor and reductant in the reaction, yielding dihydrofolate (DHF) as a by-product. This enzymatic reaction provides an intracellular de novo source of dTMP, an essential precursor for DNA biosynthesis. The polypeptide is Thymidylate synthase (Mycoplasma genitalium (strain ATCC 33530 / DSM 19775 / NCTC 10195 / G37) (Mycoplasmoides genitalium)).